A 428-amino-acid chain; its full sequence is Serine--tRNA ligase (428 aa).

Residue 235–237 coordinates L-serine; sequence TAE. 266 to 268 is an ATP binding site; that stretch reads RSE. Glutamate 289 provides a ligand contact to L-serine. 353–356 provides a ligand contact to ATP; sequence EISS. Serine 389 lines the L-serine pocket.

It belongs to the class-II aminoacyl-tRNA synthetase family. Type-1 seryl-tRNA synthetase subfamily. In terms of assembly, homodimer. The tRNA molecule binds across the dimer.

The protein localises to the cytoplasm. The enzyme catalyses tRNA(Ser) + L-serine + ATP = L-seryl-tRNA(Ser) + AMP + diphosphate + H(+). The catalysed reaction is tRNA(Sec) + L-serine + ATP = L-seryl-tRNA(Sec) + AMP + diphosphate + H(+). The protein operates within aminoacyl-tRNA biosynthesis; selenocysteinyl-tRNA(Sec) biosynthesis; L-seryl-tRNA(Sec) from L-serine and tRNA(Sec): step 1/1. Functionally, catalyzes the attachment of serine to tRNA(Ser). Is also able to aminoacylate tRNA(Sec) with serine, to form the misacylated tRNA L-seryl-tRNA(Sec), which will be further converted into selenocysteinyl-tRNA(Sec). The protein is Serine--tRNA ligase of Shewanella sediminis (strain HAW-EB3).